The following is a 375-amino-acid chain: Platelet-derived growth factor receptor-like protein (375 aa).

Residues 1-17 form the signal peptide; that stretch reads MKVWLLLGLLLLHEALG. A disordered region spans residues 19 to 63; sequence VAGQHPPKNKRPKEQGENRIKPTNKKAKPKIPKIKDRDTADSAPK. Residues 40–50 are compositionally biased toward basic residues; that stretch reads PTNKKAKPKIP. In terms of domain architecture, Ig-like C2-type 1 spans 62–159; the sequence is PKSQSIMMQA…GYICRRDEAR (98 aa). A disulfide bridge connects residues Cys96 and Cys143. N-linked (GlcNAc...) asparagine glycosylation occurs at Asn219. The Ig-like C2-type 2 domain occupies 272-375; the sequence is PSTTILASSN…TTVATTVEFS (104 aa). Cys293 and Cys357 form a disulfide bridge.

Forms a complex composed of PDGFRL, TNK2 and GRB2.

Its subcellular location is the secreted. The chain is Platelet-derived growth factor receptor-like protein (Pdgfrl) from Rattus norvegicus (Rat).